The primary structure comprises 553 residues: Major facilitator-type transporter hxnZ (553 aa).

The next 5 helical transmembrane spans lie at Phe89–Val109, Val128–Ile148, Pro152–Ser172, Phe174–Cys194, and Ala213–Leu233. Asn235 carries an N-linked (GlcNAc...) asparagine glycan. 7 helical membrane-spanning segments follow: residues Tyr257–Phe277, Ala366–Leu386, Ile409–Leu429, Trp433–Lys453, Leu459–Met481, Thr496–Ala516, and Pro525–Phe545.

The protein belongs to the major facilitator superfamily.

It is found in the cell membrane. In terms of biological role, major facilitator-type transporter, part of the hnx cluster involved in the purine degradation. The nicotinate hydroxylase hnxS accepts nicotinate as a substrate and catalyzes the first step of nicotinate catabolism. The major facilitator-type transporters hxnP and hxnZ are probably involved in the uptake of nicotinate-derived metabolites, and the oxidoreductases hxnT and hxnY in the further metabolism of 6-OH nicotinic acid. The polypeptide is Major facilitator-type transporter hxnZ (Emericella nidulans (strain FGSC A4 / ATCC 38163 / CBS 112.46 / NRRL 194 / M139) (Aspergillus nidulans)).